The following is a 129-amino-acid chain: Small ribosomal subunit protein uS11 (129 aa).

It belongs to the universal ribosomal protein uS11 family. As to quaternary structure, part of the 30S ribosomal subunit. Interacts with proteins S7 and S18. Binds to IF-3.

Located on the platform of the 30S subunit, it bridges several disparate RNA helices of the 16S rRNA. Forms part of the Shine-Dalgarno cleft in the 70S ribosome. The polypeptide is Small ribosomal subunit protein uS11 (Baumannia cicadellinicola subsp. Homalodisca coagulata).